The primary structure comprises 95 residues: Defensin alpha 4 (95 aa).

Positions 1-19 (MRTLALLAAILLVALQAQA) are cleaved as a signal peptide. A propeptide spanning residues 20-62 (EHISVSIDEVVDQQPPQAEDQDVAIYVKEHESSALEALGVKAG) is cleaved from the precursor. Disulfide bonds link cysteine 65–cysteine 93, cysteine 67–cysteine 82, and cysteine 72–cysteine 92.

This sequence belongs to the alpha-defensin family.

The protein resides in the secreted. Its function is as follows. Host-defense peptide that has antimicrobial activity. Inhibits corticotropin (ACTH)-stimulated corticosterone production (in vitro). The polypeptide is Defensin alpha 4 (Oryctolagus cuniculus (Rabbit)).